A 255-amino-acid chain; its full sequence is Imidazole glycerol phosphate synthase subunit HisF (255 aa).

Residues D11 and D130 contribute to the active site.

The protein belongs to the HisA/HisF family. Heterodimer of HisH and HisF.

It localises to the cytoplasm. It catalyses the reaction 5-[(5-phospho-1-deoxy-D-ribulos-1-ylimino)methylamino]-1-(5-phospho-beta-D-ribosyl)imidazole-4-carboxamide + L-glutamine = D-erythro-1-(imidazol-4-yl)glycerol 3-phosphate + 5-amino-1-(5-phospho-beta-D-ribosyl)imidazole-4-carboxamide + L-glutamate + H(+). It functions in the pathway amino-acid biosynthesis; L-histidine biosynthesis; L-histidine from 5-phospho-alpha-D-ribose 1-diphosphate: step 5/9. In terms of biological role, IGPS catalyzes the conversion of PRFAR and glutamine to IGP, AICAR and glutamate. The HisF subunit catalyzes the cyclization activity that produces IGP and AICAR from PRFAR using the ammonia provided by the HisH subunit. In Rhodopseudomonas palustris (strain HaA2), this protein is Imidazole glycerol phosphate synthase subunit HisF.